The sequence spans 561 residues: Dihydroxy-acid dehydratase (561 aa).

Position 51 (Cys51) interacts with [2Fe-2S] cluster. Mg(2+) is bound at residue Asp83. Cys124 contributes to the [2Fe-2S] cluster binding site. Asp125 and Lys126 together coordinate Mg(2+). At Lys126 the chain carries N6-carboxylysine. Position 196 (Cys196) interacts with [2Fe-2S] cluster. A Mg(2+)-binding site is contributed by Glu448. Ser474 acts as the Proton acceptor in catalysis.

This sequence belongs to the IlvD/Edd family. As to quaternary structure, homodimer. [2Fe-2S] cluster is required as a cofactor. The cofactor is Mg(2+).

It carries out the reaction (2R)-2,3-dihydroxy-3-methylbutanoate = 3-methyl-2-oxobutanoate + H2O. The enzyme catalyses (2R,3R)-2,3-dihydroxy-3-methylpentanoate = (S)-3-methyl-2-oxopentanoate + H2O. It participates in amino-acid biosynthesis; L-isoleucine biosynthesis; L-isoleucine from 2-oxobutanoate: step 3/4. Its pathway is amino-acid biosynthesis; L-valine biosynthesis; L-valine from pyruvate: step 3/4. Functions in the biosynthesis of branched-chain amino acids. Catalyzes the dehydration of (2R,3R)-2,3-dihydroxy-3-methylpentanoate (2,3-dihydroxy-3-methylvalerate) into 2-oxo-3-methylpentanoate (2-oxo-3-methylvalerate) and of (2R)-2,3-dihydroxy-3-methylbutanoate (2,3-dihydroxyisovalerate) into 2-oxo-3-methylbutanoate (2-oxoisovalerate), the penultimate precursor to L-isoleucine and L-valine, respectively. The protein is Dihydroxy-acid dehydratase of Pyrobaculum neutrophilum (strain DSM 2338 / JCM 9278 / NBRC 100436 / V24Sta) (Thermoproteus neutrophilus).